A 124-amino-acid chain; its full sequence is Small ribosomal subunit protein uS12 (124 aa).

The residue at position 89 (Asp-89) is a 3-methylthioaspartic acid.

This sequence belongs to the universal ribosomal protein uS12 family. As to quaternary structure, part of the 30S ribosomal subunit. Contacts proteins S8 and S17. May interact with IF1 in the 30S initiation complex.

Its function is as follows. With S4 and S5 plays an important role in translational accuracy. Interacts with and stabilizes bases of the 16S rRNA that are involved in tRNA selection in the A site and with the mRNA backbone. Located at the interface of the 30S and 50S subunits, it traverses the body of the 30S subunit contacting proteins on the other side and probably holding the rRNA structure together. The combined cluster of proteins S8, S12 and S17 appears to hold together the shoulder and platform of the 30S subunit. The polypeptide is Small ribosomal subunit protein uS12 (Baumannia cicadellinicola subsp. Homalodisca coagulata).